Here is a 515-residue protein sequence, read N- to C-terminus: C-glycoside 3-oxidase (515 aa).

Glu41 provides a ligand contact to FAD. Basic and acidic residues predominate over residues 62 to 82 (ERAHAQRRSEGPHAREDDDRV). The interval 62–90 (ERAHAQRRSEGPHAREDDDRVGGIVKSAQ) is disordered. The FAD site is built by Ser118, Asn120, Met124, Thr129, Ala131, and Val237. The active-site Proton acceptor is His444. FAD-binding residues include Asn478 and Thr490.

This sequence belongs to the GMC oxidoreductase family. Monomer. The cofactor is FAD.

It catalyses the reaction isoorientin + O2 = 3''-dehydroisoorientin + H2O2. The enzyme catalyses mangiferin + O2 = 3'-dehydromangiferin + H2O2. In terms of biological role, FAD-dependent C-glycoside-metabolizing enzyme that participates in the degradation of certain C-glycosides by catalyzing the oxidation of the hydroxyl group at the C3 position of the sugar moiety. Shows oxidase activity toward C-glycosides such as isoorientin and mangiferin but cannot use carminic acid, puerarin, orientin or aloesin. Shows weak activity (100 to 1000-fold lower) with O-glycosides. Probably plays a crucial role in the metabolism of C-glycosides in nature. This Microbacterium trichothecenolyticum (Aureobacterium trichothecenolyticum) protein is C-glycoside 3-oxidase.